The following is a 291-amino-acid chain: Elongation factor Ts (291 aa).

Positions 79 to 82 (TDFV) are involved in Mg(2+) ion dislocation from EF-Tu.

The protein belongs to the EF-Ts family.

It is found in the cytoplasm. Its function is as follows. Associates with the EF-Tu.GDP complex and induces the exchange of GDP to GTP. It remains bound to the aminoacyl-tRNA.EF-Tu.GTP complex up to the GTP hydrolysis stage on the ribosome. In Leuconostoc mesenteroides subsp. mesenteroides (strain ATCC 8293 / DSM 20343 / BCRC 11652 / CCM 1803 / JCM 6124 / NCDO 523 / NBRC 100496 / NCIMB 8023 / NCTC 12954 / NRRL B-1118 / 37Y), this protein is Elongation factor Ts.